A 111-amino-acid polypeptide reads, in one-letter code: Flagellar hook-basal body complex protein FliE (111 aa).

This sequence belongs to the FliE family.

The protein resides in the bacterial flagellum basal body. This is Flagellar hook-basal body complex protein FliE from Brucella abortus (strain S19).